The chain runs to 65 residues: Metallothionein (65 aa).

This sequence belongs to the metallothionein superfamily. Type 4 family.

Functionally, metallothioneins have a high content of cysteine residues that bind various heavy metals. The polypeptide is Metallothionein (Paracentrotus lividus (Common sea urchin)).